The following is a 269-amino-acid chain: Protein IAL1 (269 aa).

An LOB domain is found at 32 to 133; it reads SPCAACKFLR…QDLARAKYEL (102 aa).

This sequence belongs to the LOB domain-containing protein family. Expressed in leaves, leaf primordia, immature ears, immature tassels, whole ovules, silk and husk leaves.

Its subcellular location is the nucleus. The protein is Protein IAL1 of Zea mays (Maize).